We begin with the raw amino-acid sequence, 47 residues long: NADH dehydrogenase [ubiquinone] iron-sulfur protein 2 (47 aa).

Belongs to the complex I 49 kDa subunit family. In terms of assembly, complex I is composed of about 45 different subunits. This is a component of the iron-sulfur (IP) fragment of the enzyme.

It localises to the mitochondrion inner membrane. It catalyses the reaction a ubiquinone + NADH + 5 H(+)(in) = a ubiquinol + NAD(+) + 4 H(+)(out). Its function is as follows. Core subunit of the mitochondrial membrane respiratory chain NADH dehydrogenase (Complex I) that is believed to belong to the minimal assembly required for catalysis. Complex I functions in the transfer of electrons from NADH to the respiratory chain. The immediate electron acceptor for the enzyme is believed to be ubiquinone. Component of the iron-sulfur (IP) fragment of the enzyme. This is NADH dehydrogenase [ubiquinone] iron-sulfur protein 2 (NAD7) from Solanum tuberosum (Potato).